A 547-amino-acid chain; its full sequence is Cytochrome P450 monooxygenase fsoD (547 aa).

Residues 3–23 (DITLAAVSIGLFFYVGARAVL) traverse the membrane as a helical segment. C490 is a binding site for heme.

The protein belongs to the cytochrome P450 family. Requires heme as cofactor.

The protein resides in the membrane. It carries out the reaction isomotiol + reduced [NADPH--hemoprotein reductase] + O2 = 2alpha-hydroxyisomotiol + oxidized [NADPH--hemoprotein reductase] + H2O + H(+). The protein operates within secondary metabolite biosynthesis; terpenoid biosynthesis. Cytochrome P450 monooxygenase; part of the gene cluster that mediates the biosynthesis of the enfumafungin-type antibiotic, fuscoatroside. Within the pathway, fsoD catalyzes the hydroxylation at position C2 of isomotiol to produce 2-alpha-hydroxy-isomotiol. FsoD may also hydroxylate the intermediates 3-O-(beta-D-glucopyranosyl)-isomotiol and 2-deacetoxy-fuscoatroside at the same position C2. The fuscoatroside biosynthesis is initiated by the cyclization of 2,3(S)-oxidosqualene through FsoA's terpene cyclase (TC) domain, leading to the formation of the fernane skeleton isomotiol, harboring a fernane triterpene skeleton with a C8-C9 double bond. Subsequently, C2-alpha-hydroxylation mediated by fsoD results in the production of 2-alpha-hydroxy-isomotiol, which is further acetylated by fsoF. The glycosyltransferase (GT) domain of FsoA may convert isomotiol, 2-alpha-hydroxy-isomotiol, and the acetylated derivative of 2-alpha-hydroxy-isomotiol into their corresponding glycosides 3-O-(beta-D-glucopyranosyl)-isomotiol, 3-O-(beta-D-glucopyranosyl)-2-alpha-hydroxy-isomotiol, and 3-O-(beta-D-glucopyranosyl)-2-alpha-acetoxy-isomotiol, which then undergo oxidative cleavage under the action of fsoE to form s 2-deacetoxy-fuscoatroside, 2-deacetyl-fuscoatroside, and fuscoatroside, respectively. Although hydroxylation followed by acetylation of 3-O-(beta-D-glucopyranosyl)-isomotiol and 2-deacetoxy-fuscoatroside by fsoD and fsoF could not be ruled out, this process is likely to occur with difficulty due to bulky steric hindrance caused by the presence of a glycan at C3 in these compounds. Interestingly, fsoE can also utilize the aglycones isomotiol and 2-alpha-hydroxy-isomotiol as substrates to generate 19-beta-hydroxy-isomotiol and 2-alpha,19-beta-dihydroxy-isomotiol, respectively. These reactions occur with lower efficiency. Finally, fsoE can further convert 2-alpha,19-beta-dihydroxy-isomotiol into 2-alpha-hydroxy-ismotiol-19-one and 2-alpha-hydroxy-ismotiol-19-one into 2-deacetyl-3-deglucopyranosyl-fuscoatroside. This chain is Cytochrome P450 monooxygenase fsoD, found in Humicola fuscoatra.